We begin with the raw amino-acid sequence, 353 residues long: MRIEKDKELMNILKIMAPGTPLREGLENILRAKTGGLLILGDSDQILKLVDGGFKINSEYSPSYVYELAKMDGSIVLSSDLKKILCANAQLIPDSSIPTFETGTRHRTADRVAKQTGAIVIAISQRRNIITVYKGGIKYVLRDSSIILARANQALQTLEKYVAVLDRVVNNLNILEFKDIATLFDVLTAIQRSEMVMRIVSEIERYICELGNEGRLIDMQLSELIKSVEEDGILLIRDYCRSNMEYEDIYKQIQGLSSEELLNLDGLSKIIGYTGVPLVDTLISPRGYRMINKIPRIPSNVIENLVANFNQLKCVMEASYEQLDNVEGIGEARAKAIKNGLRRLREQIMLDKV.

One can recognise a DAC domain in the interval 6 to 144 (DKELMNILKI…GGIKYVLRDS (139 aa)). Residues G73, L91, and 104–108 (TRHRT) contribute to the ATP site.

The protein belongs to the DisA family. In terms of assembly, homooctamer. Mg(2+) serves as cofactor.

The enzyme catalyses 2 ATP = 3',3'-c-di-AMP + 2 diphosphate. Functionally, participates in a DNA-damage check-point that is active prior to asymmetric division when DNA is damaged. DisA forms globular foci that rapidly scan along the chromosomes during sporulation, searching for lesions. When a lesion is present, DisA pauses at the lesion site. This triggers a cellular response that culminates in a temporary block in sporulation initiation. Its function is as follows. Also has diadenylate cyclase activity, catalyzing the condensation of 2 ATP molecules into cyclic di-AMP (c-di-AMP). c-di-AMP acts as a signaling molecule that couples DNA integrity with progression of sporulation. The rise in c-di-AMP level generated by DisA while scanning the chromosome, operates as a positive signal that advances sporulation; upon encountering a lesion, the DisA focus arrests at the damaged site and halts c-di-AMP synthesis. This chain is DNA integrity scanning protein DisA, found in Clostridium botulinum (strain 657 / Type Ba4).